Consider the following 172-residue polypeptide: 3-hydroxydecanoyl-[acyl-carrier-protein] dehydratase (172 aa).

Histidine 71 is an active-site residue.

It belongs to the thioester dehydratase family. FabA subfamily. Homodimer.

It is found in the cytoplasm. The enzyme catalyses a (3R)-hydroxyacyl-[ACP] = a (2E)-enoyl-[ACP] + H2O. The catalysed reaction is (3R)-hydroxydecanoyl-[ACP] = (2E)-decenoyl-[ACP] + H2O. It carries out the reaction (2E)-decenoyl-[ACP] = (3Z)-decenoyl-[ACP]. It participates in lipid metabolism; fatty acid biosynthesis. In terms of biological role, necessary for the introduction of cis unsaturation into fatty acids. Catalyzes the dehydration of (3R)-3-hydroxydecanoyl-ACP to E-(2)-decenoyl-ACP and then its isomerization to Z-(3)-decenoyl-ACP. Can catalyze the dehydratase reaction for beta-hydroxyacyl-ACPs with saturated chain lengths up to 16:0, being most active on intermediate chain length. This is 3-hydroxydecanoyl-[acyl-carrier-protein] dehydratase from Brucella anthropi (strain ATCC 49188 / DSM 6882 / CCUG 24695 / JCM 21032 / LMG 3331 / NBRC 15819 / NCTC 12168 / Alc 37) (Ochrobactrum anthropi).